We begin with the raw amino-acid sequence, 528 residues long: MPLTLGQSLFANFLGNSPRWYKFAILSFLAINPILFYLNPFIAGWVLVIQFIFTLAMALKCYPLQPGGLLAIEAVIIGMTSPTQVLHEIQANLEVLLLLVFMVAGIYFMKQLLLYAFTKMLTKVRSKIVVSMLFCIASAFLSAFLDALTVIAVIITVAVGFYSIYHKVASGKDFSSDHDHTSEAPEQLNESELESFRGFLRNLLMHAGVGTALGGVCTMVGEPQNLIIAAQANWQFGEFAIRMSPVTVPVFFAGILTCFIVEKFKWFGYGAKLPEAVHKILSEYDAYEDARRTPKDKVKLIVQALVGVWLIVGLAFHLASVGLIGLSVIILNTAFNGITDEHALGKAFEEALPFTALLAVFFAVVGVIIDQQLFAPVIQWALSYEGNVQLVIFYIANGLLSMVSDNVFVGTVYINEVKAALLNGQITRDQFDLLAVAINTGTNLPSVATPNGQAAFLFLLTSALAPLIRLSYGRMVMMALPYTIVLSIVGILAIESGFLTDMTQYFYDSHLINHHTAAEAAGKALGGH.

Helical transmembrane passes span 23–45, 66–86, 95–115, 130–164, 203–223, 241–261, 310–330, 349–369, 390–410, 448–468, and 475–495; these read FAIL…IAGW, PGGL…TQVL, VLLL…LLLY, VSML…FYSI, LLMH…VGEP, IRMS…CFIV, LIVG…SVII, EEAL…GVII, LVIF…VFVG, ATPN…APLI, and MVMM…LAIE.

The protein belongs to the NhaB Na(+)/H(+) (TC 2.A.34) antiporter family.

It is found in the cell inner membrane. The catalysed reaction is 2 Na(+)(in) + 3 H(+)(out) = 2 Na(+)(out) + 3 H(+)(in). In terms of biological role, na(+)/H(+) antiporter that extrudes sodium in exchange for external protons. This Shewanella amazonensis (strain ATCC BAA-1098 / SB2B) protein is Na(+)/H(+) antiporter NhaB.